The chain runs to 61 residues: Bacteriocin mesentericin Y105 (61 aa).

The first 24 residues, 1–24, serve as a signal peptide directing secretion; sequence MTNMKSVEAYQQLDNQNLKKVVGG. Cysteine 33 and cysteine 38 are oxidised to a cystine.

The protein belongs to the bacteriocin class IIA/YGNGV family.

It is found in the secreted. Functionally, bacteriocin active against Listeria monocytogenes. This chain is Bacteriocin mesentericin Y105 (mesY), found in Leuconostoc mesenteroides.